We begin with the raw amino-acid sequence, 266 residues long: Energy-coupling factor transporter ATP-binding protein EcfA2 (266 aa).

The region spanning I3–M238 is the ABC transporter domain. An ATP-binding site is contributed by G43 to T48. Residue E164 is the Proton acceptor of the active site. Residues G220 to S266 are required for heterodimer formation.

It belongs to the ABC transporter superfamily. Energy-coupling factor EcfA family. In terms of assembly, forms a heterodimer with EcfA1. Forms a stable energy-coupling factor (ECF) transporter complex composed of 2 membrane-embedded substrate-binding proteins (S component, RibU, BioY), 2 ATP-binding proteins (A component) and 2 transmembrane proteins (T component) upon coexpression in E.coli. Stable subcomplexes with both A plus T components can also be isolated. This complex interacts with at least 2 substrate-specific components, BioY and RibU.

It localises to the cell inner membrane. ATP-binding (A) component of a common energy-coupling factor (ECF) ABC-transporter complex. Unlike classic ABC transporters this ECF transporter provides the energy necessary to transport a number of different substrates. Expression of the complex plus RibU in E.coli allows riboflavin uptake; uptake does not occur in the absence of RibU or the EcfA1A2T complex. The chain is Energy-coupling factor transporter ATP-binding protein EcfA2 (ecfA2) from Thermotoga maritima (strain ATCC 43589 / DSM 3109 / JCM 10099 / NBRC 100826 / MSB8).